A 493-amino-acid polypeptide reads, in one-letter code: MQNNKDNYLKFTKMDKKSIRAPYDQNDLSKKIQRIKKREDIFLLYKINNIITEHTLLQPKQRILIAVSGGQDSICLLRILFDLQRKWSWKLGIIHCDHRWNSRSKIQAEHVACLAINLQINYHEGIAIESVQKESIARLWRYNVIQSVAISNNYTAIITGHNASDRIETLLYNLMRGSGLHGLQSIKWKRNLCFSHFTRSVLSKIKFSFLVKKLKFIKTFMDHEDFQGNHFFFLKKRKQLHLIRPFLETTRTEIRNILTIWNFPSWPDVSNKELRIRRNRIRHRVIPYIRIHYNPNIDQTLVRWAEIVQSETFYLEQLTNYILFKIEIKKKISSISLKIPLEQLRKQKEPSEEKLNFYQSAIPVDLLRSLPVAIQRRVLKQYIYINTNRILGFQYIEQIRLSCLFSLQDSLRKFLHRHRCRPIYLSEHISTHSMKSSTSDTCIDWKGPKEKKKLVTPWLIFPGGIKFLIRKNYLFIFSPKNSSLTIKRPRIEQ.

68–73 (SGGQDS) is an ATP binding site.

The protein belongs to the tRNA(Ile)-lysidine synthase family.

It is found in the plastid. It localises to the chloroplast. The catalysed reaction is cytidine(34) in tRNA(Ile2) + L-lysine + ATP = lysidine(34) in tRNA(Ile2) + AMP + diphosphate + H(+). Ligates lysine onto the cytidine present at position 34 of the AUA codon-specific tRNA(Ile) that contains the anticodon CAU, in an ATP-dependent manner. Cytidine is converted to lysidine, thus changing the amino acid specificity of the tRNA from methionine to isoleucine. In Staurastrum punctulatum (Green alga), this protein is tRNA(Ile)-lysidine synthase, chloroplastic.